A 99-amino-acid chain; its full sequence is Acylphosphatase (99 aa).

An Acylphosphatase-like domain is found at 5–97 (VRQIVIRGRV…RPGERFSQLP (93 aa)). Catalysis depends on residues R20 and N38.

It belongs to the acylphosphatase family.

The enzyme catalyses an acyl phosphate + H2O = a carboxylate + phosphate + H(+). The polypeptide is Acylphosphatase (acyP) (Nitrobacter hamburgensis (strain DSM 10229 / NCIMB 13809 / X14)).